Here is a 950-residue protein sequence, read N- to C-terminus: MLYSSRGDPEGQPLLLSLLILAMWVVGSGQLHYSVPEEAEHGTFVGRIAQDLGLELAELVPRLFQLDSKGRGDLLEVNLQNGILFVNSRIDREELCGRSAECSIHLEVIVDRPLQVFHVDVEVKDINDNPPVFPATQKNLFIAESRPLDSRFPLEGASDADIGENALLTYRLSPNEYFFLDVPTSNQQVKPLGLVLRKLLDREETPELHLLLTATDGGKPELTGTVQLLITVLDNNDNAPVFDRTLYTVKLPENVSIGTLVIHPNASDLDEGLNGDIIYSFSSDVSPDIKSKFHMDPLSGAITVIGHMDFEESRAHKIPVEAVDKGFPPLAGHCTLLVEVVDVNDNAPQLTIKTLSVPVKEDAQLGTVIALISVIDLDADANGQVTCSLTPHVPFKLVSTYKNYYSLVLDRALDRESVSAYELVVTARDGGSPSLWATARVSVEVADVNDNAPAFAQSEYTVFVKENNPPGCHIFTVSARDADAQENALVSYSLVERRLGERSLSSYVSVHAESGKVYALQPLDHEELELLQFQVSARDAGVPPLGSNVTLQVFVLDENDNAPALLTPRMRGTDGAVSEMVLRSVGAGVVVGKVRAVDADSGYNAWLSYELQPETASASIPFRVGLYTGEISTTRALDETDAPRQRLLVLVKDHGEPALTATATVLVSLVESGQAPKSSSRASVGATGPEVTLVDVNVYLIIAICAVSSLLVLTLLLYTVLRCSAMPTEGECAPGKPTLVCSSAVGSWSYSQQRRQRVCSGEGKQKTDLMAFSPGLSPCAGSTERTGEPSASSDSTGKPRQPNPDWRYSASLRAGMHSSVHLEEAGILRAGPGGPDQQWPTVSSATPEPEAGEVSPPVGAGVNSNSWTFKYGPGNPKQSGPGELPDKFIIPGSPAIISIRQEPTNSQIDKSDFITFGKKEETKKKKKKKKGNKTQEKKEKGNSTTDNSDQ.

The N-terminal stretch at 1–29 (MLYSSRGDPEGQPLLLSLLILAMWVVGSG) is a signal peptide. 6 consecutive Cadherin domains span residues 30 to 133 (QLHY…PPVF), 134 to 242 (PATQ…APVF), 243 to 350 (DRTL…APQL), 351 to 455 (TIKT…APAF), 456 to 565 (AQSE…APAL), and 588 to 678 (GVVV…APKS). The Extracellular portion of the chain corresponds to 30–697 (QLHYSVPEEA…GPEVTLVDVN (668 aa)). N-linked (GlcNAc...) asparagine glycosylation is found at Asn254 and Asn265. Asn548 is a glycosylation site (N-linked (GlcNAc...) asparagine). Residues 698 to 718 (VYLIIAICAVSSLLVLTLLLY) form a helical membrane-spanning segment. Over 719-950 (TVLRCSAMPT…GNSTTDNSDQ (232 aa)) the chain is Cytoplasmic. A PXXP 1 repeat occupies 734-737 (PGKP). Residues 734–894 (PGKPTLVCSS…PDKFIIPGSP (161 aa)) form a 5 X 4 AA repeats of P-X-X-P region. Disordered regions lie at residues 770–808 (MAFSPGLSPCAGSTERTGEPSASSDSTGKPRQPNPDWRY), 827–856 (ILRAGPGGPDQQWPTVSSATPEPEAGEVSP), and 871–950 (YGPG…NSDQ). Polar residues predominate over residues 789-798 (PSASSDSTGK). PXXP repeat units lie at residues 799–802 (PRQP), 832–835 (PGGP), 873–876 (PGNP), and 891–894 (PGSP). Over residues 909–923 (DKSDFITFGKKEETK) the composition is skewed to basic and acidic residues.

The protein resides in the cell membrane. Its function is as follows. Potential calcium-dependent cell-adhesion protein. May be involved in the establishment and maintenance of specific neuronal connections in the brain. The protein is Protocadherin alpha-9 (PCDHA9) of Homo sapiens (Human).